The primary structure comprises 338 residues: UDP-glucose 4-epimerase (338 aa).

NAD(+) contacts are provided by residues 16 to 17, 37 to 42, 59 to 60, 81 to 85, T126, Y153, K157, and F181; these read YI, IDINHT, NL, and FAAKT. Substrate contacts are provided by T126 and Y153. The active-site Proton acceptor is the Y153. Substrate contacts are provided by residues N182, 198–199, 215–217, R230, and 294–297; these read TL, FLY, and RAGD.

The protein belongs to the NAD(P)-dependent epimerase/dehydratase family. As to quaternary structure, homodimer. It depends on NAD(+) as a cofactor.

The enzyme catalyses UDP-alpha-D-glucose = UDP-alpha-D-galactose. The protein operates within carbohydrate metabolism; galactose metabolism. Its function is as follows. Involved in the metabolism of galactose. Catalyzes the conversion of UDP-galactose (UDP-Gal) to UDP-glucose (UDP-Glc) through a mechanism involving the transient reduction of NAD. The protein is UDP-glucose 4-epimerase (galE) of Mycoplasma pneumoniae (strain ATCC 29342 / M129 / Subtype 1) (Mycoplasmoides pneumoniae).